The chain runs to 202 residues: Nigerythrin (202 aa).

The Ferritin-like diiron domain maps to 23–168; sequence KTAVGSTLEN…AYNDIDAPDD (146 aa). The Fe cation site is built by Glu-40, Glu-73, Glu-115, Glu-118, Glu-149, His-152, Cys-174, Cys-177, Cys-189, and Cys-192. The 34-residue stretch at 169–202 folds into the Rubredoxin-like domain; the sequence is DKFHLCPICGYIHKGEDFEKCPICFRPKDTFTAY.

As to quaternary structure, homodimer. May possess two rubredoxin-like centers and two hemerythrin-like binuclear-iron centers per dimer.

The protein localises to the cytoplasm. Exhibits NADH peroxidase activity (in vitro). This Nitratidesulfovibrio vulgaris (strain ATCC 29579 / DSM 644 / CCUG 34227 / NCIMB 8303 / VKM B-1760 / Hildenborough) (Desulfovibrio vulgaris) protein is Nigerythrin (ngr).